Here is a 212-residue protein sequence, read N- to C-terminus: Uridine kinase (212 aa).

Position 13–20 (13–20 (GGSGSGKT)) interacts with ATP.

It belongs to the uridine kinase family.

The protein localises to the cytoplasm. It carries out the reaction uridine + ATP = UMP + ADP + H(+). The catalysed reaction is cytidine + ATP = CMP + ADP + H(+). The protein operates within pyrimidine metabolism; CTP biosynthesis via salvage pathway; CTP from cytidine: step 1/3. It functions in the pathway pyrimidine metabolism; UMP biosynthesis via salvage pathway; UMP from uridine: step 1/1. In Bacillus cytotoxicus (strain DSM 22905 / CIP 110041 / 391-98 / NVH 391-98), this protein is Uridine kinase.